Reading from the N-terminus, the 115-residue chain is Large ribosomal subunit protein bL19 (115 aa).

Belongs to the bacterial ribosomal protein bL19 family.

Its function is as follows. This protein is located at the 30S-50S ribosomal subunit interface and may play a role in the structure and function of the aminoacyl-tRNA binding site. The protein is Large ribosomal subunit protein bL19 of Wigglesworthia glossinidia brevipalpis.